A 286-amino-acid chain; its full sequence is Ribosomal RNA small subunit methyltransferase A (286 aa).

S-adenosyl-L-methionine contacts are provided by His11, Leu13, Gly44, Glu65, Asp90, and Asn115.

This sequence belongs to the class I-like SAM-binding methyltransferase superfamily. rRNA adenine N(6)-methyltransferase family. RsmA subfamily.

Its subcellular location is the cytoplasm. It catalyses the reaction adenosine(1518)/adenosine(1519) in 16S rRNA + 4 S-adenosyl-L-methionine = N(6)-dimethyladenosine(1518)/N(6)-dimethyladenosine(1519) in 16S rRNA + 4 S-adenosyl-L-homocysteine + 4 H(+). Functionally, specifically dimethylates two adjacent adenosines (A1518 and A1519) in the loop of a conserved hairpin near the 3'-end of 16S rRNA in the 30S particle. May play a critical role in biogenesis of 30S subunits. The chain is Ribosomal RNA small subunit methyltransferase A from Nostoc punctiforme (strain ATCC 29133 / PCC 73102).